The sequence spans 944 residues: Nonsense-mediated mRNA decay factor SMG8 (944 aa).

Disordered regions lie at residues 560–597 (NTGKSGAPQDEDAGEDEAEEEEGQERELPTKKKLQNTA) and 628–653 (QASSEQLSNSEQNTTSSGTSSADTEN). Positions 568 to 583 (QDEDAGEDEAEEEEGQ) are enriched in acidic residues. Over residues 628-650 (QASSEQLSNSEQNTTSSGTSSAD) the composition is skewed to polar residues.

It belongs to the SMG8 family.

Involved in nonsense-mediated decay (NMD) of mRNAs containing premature stop codons. Probable component of kinase complex containing nonC and recruited to stalled ribosomes. In Drosophila simulans (Fruit fly), this protein is Nonsense-mediated mRNA decay factor SMG8.